Consider the following 140-residue polypeptide: Large ribosomal subunit protein uL16 (140 aa).

It belongs to the universal ribosomal protein uL16 family. Part of the 50S ribosomal subunit.

Its function is as follows. Binds 23S rRNA and is also seen to make contacts with the A and possibly P site tRNAs. This Amoebophilus asiaticus (strain 5a2) protein is Large ribosomal subunit protein uL16.